A 162-amino-acid chain; its full sequence is MPSFDVVSELNLMEVENAFNQARKEILQRFDFKGTSTDLERDKDENVVVKAGSEGRAEAALQVLMEKLAKRGVPLEGLDPQKLEPASGGSVRQLVKLKRGLKQEDAKRIVALMKESGLKVQAAIQGEAVRISGKKKDDLQAAMQAIRTGGLGVPLQFQNFRE.

It belongs to the YajQ family.

In terms of biological role, nucleotide-binding protein. In Anaeromyxobacter sp. (strain Fw109-5), this protein is Nucleotide-binding protein Anae109_0095.